The sequence spans 360 residues: DNA replication and repair protein RecF (360 aa).

Residue 33 to 40 (GENGSGKT) participates in ATP binding.

It belongs to the RecF family.

Its subcellular location is the cytoplasm. The RecF protein is involved in DNA metabolism; it is required for DNA replication and normal SOS inducibility. RecF binds preferentially to single-stranded, linear DNA. It also seems to bind ATP. This chain is DNA replication and repair protein RecF, found in Rickettsia akari (strain Hartford).